Consider the following 86-residue polypeptide: uncharacterized protein (86 aa).

An N-terminal signal peptide occupies residues Met1–Ala31. A disordered region spans residues Pro46–Met69. The span at Lys55–Met69 shows a compositional bias: basic and acidic residues.

This is an uncharacterized protein from Bacillus subtilis (strain 168).